Reading from the N-terminus, the 202-residue chain is Proteasome subunit beta 1 (202 aa).

Residue M1 is a propeptide, removed in mature form; by autocatalysis. The Nucleophile role is filled by T2.

Belongs to the peptidase T1B family. As to quaternary structure, the 20S proteasome core is composed of 14 alpha and 14 beta subunits that assemble into four stacked heptameric rings, resulting in a barrel-shaped structure. The two inner rings, each composed of seven catalytic beta subunits, are sandwiched by two outer rings, each composed of seven alpha subunits. The catalytic chamber with the active sites is on the inside of the barrel. Has a gated structure, the ends of the cylinder being occluded by the N-termini of the alpha-subunits. Is capped at one or both ends by the proteasome regulatory ATPase, PAN.

The protein localises to the cytoplasm. The enzyme catalyses Cleavage of peptide bonds with very broad specificity.. With respect to regulation, the formation of the proteasomal ATPase PAN-20S proteasome complex, via the docking of the C-termini of PAN into the intersubunit pockets in the alpha-rings, triggers opening of the gate for substrate entry. Interconversion between the open-gate and close-gate conformations leads to a dynamic regulation of the 20S proteasome proteolysis activity. Functionally, component of the proteasome core, a large protease complex with broad specificity involved in protein degradation. The sequence is that of Proteasome subunit beta 1 from Pyrobaculum arsenaticum (strain DSM 13514 / JCM 11321 / PZ6).